The primary structure comprises 88 residues: Large ribosomal subunit protein uL29 (88 aa).

The protein belongs to the universal ribosomal protein uL29 family.

The polypeptide is Large ribosomal subunit protein uL29 (rpl29) (Sulfurisphaera tokodaii (strain DSM 16993 / JCM 10545 / NBRC 100140 / 7) (Sulfolobus tokodaii)).